A 561-amino-acid chain; its full sequence is Melanopsin-A (561 aa).

Topologically, residues 1 to 34 (MRPSTDTMEADTAATHRNFITKVDVPDHAHYTVA) are extracellular. Residues 35–55 (FFVSVIGTLGVTGNALVQFAF) form a helical membrane-spanning segment. Over 56-68 (YSNKKLRNLPNYF) the chain is Cytoplasmic. The helical transmembrane segment at 69 to 89 (IMNQAASDFLMAFTQSPFFFI) threads the bilayer. At 90–104 (NCLNREWIFGELGCK) the chain is on the extracellular side. The cysteines at positions 103 and 181 are disulfide-linked. A helical transmembrane segment spans residues 105–125 (LYAFLGALFGITSMINLLAIS). The Cytoplasmic segment spans residues 126-148 (LDRYMVITRPLEAMKWNSKRRTT). The chain crosses the membrane as a helical span at residues 149-169 (IAILLVWLYSLAWSLAPLVGW). The Extracellular portion of the chain corresponds to 170–201 (SSYIPEGLRTSCTWDYVTYTASNRSYTMMLCC). N-linked (GlcNAc...) asparagine glycosylation is present at N192. Residues 202-222 (FVFFIPLAIISYCYLFMFLAI) form a helical membrane-spanning segment. Residues 223 to 255 (RKTSRDVERLGIQVRKSTIIRQKSIRTEWKLAK) lie on the Cytoplasmic side of the membrane. A helical membrane pass occupies residues 256 to 276 (IAFVVIVVYVLSWSPYACVTM). The Extracellular segment spans residues 277–291 (ISWSGHANILSPYSK). A helical membrane pass occupies residues 292 to 312 (TVPAVIAKASTIYNPFIYAII). An N6-(retinylidene)lysine modification is found at K299. Residues 313 to 561 (HQKYRKTLAD…EDSLEDNDVV (249 aa)) lie on the Cytoplasmic side of the membrane. Disordered stretches follow at residues 359 to 385 (AIRRQSTAASRHASASKTAAGASSYSS), 404 to 448 (ASFR…SATH), 479 to 503 (NGLSDAGKKTTVANGTPGNHKSKSA), and 539 to 561 (SFTDDGSVGTVVDEDSLEDNDVV). The segment covering 371–385 (ASASKTAAGASSYSS) has biased composition (low complexity). The span at 550-561 (VDEDSLEDNDVV) shows a compositional bias: acidic residues.

This sequence belongs to the G-protein coupled receptor 1 family. Opsin subfamily. In terms of tissue distribution, expressed in retina and brain. Expressed in a subset of retinal horizontal cells as well as a small number of amacrine and retinal ganglion cells. Also expressed in a small population of neurons in the suprachiasmatic nucleus (SNC).

It localises to the cell membrane. Its function is as follows. Photoreceptor implicated in non-image-forming responses to light. In Gadus morhua (Atlantic cod), this protein is Melanopsin-A (opn4a).